The sequence spans 580 residues: uncharacterized protein (580 aa).

The span at 1 to 44 (MSESSVNADTPKNTNDVLNGAYQSATTEPEGQYRSATDNPSLYQ) shows a compositional bias: polar residues. Positions 1–45 (MSESSVNADTPKNTNDVLNGAYQSATTEPEGQYRSATDNPSLYQV) are disordered. Position 99 is a phosphoserine (Ser99). A run of 12 helical transmembrane segments spans residues 143–163 (IYAY…PASA), 177–197 (LLNV…WAPM), 207–227 (LYIG…AQDI), 235–255 (FFGG…FADM), 265–285 (ITIF…VGGF), 295–315 (WTEY…YLFC), 370–390 (PIVF…YLLL), 405–425 (LGVS…GCGI), 450–470 (LPPM…LAWS), 476–496 (VHWI…LLIF), 511–533 (AASV…PLFA), and 546–566 (GSLL…FFFF).

It belongs to the major facilitator superfamily. CAR1 family.

Its subcellular location is the membrane. This is an uncharacterized protein from Schizosaccharomyces pombe (strain 972 / ATCC 24843) (Fission yeast).